A 667-amino-acid polypeptide reads, in one-letter code: Smc-like protein Sph2 (667 aa).

Coiled-coil stretches lie at residues 153-295 (GSIQ…SLAT) and 355-517 (GRLD…AITA).

It belongs to the Sph1/Sph2 family.

The protein resides in the cytoplasm. Functionally, may play a role in replication. The protein is Smc-like protein Sph2 (sph2) of Halobacterium salinarum (strain ATCC 29341 / DSM 671 / R1).